Consider the following 709-residue polypeptide: Fatty acid oxidation complex subunit alpha (709 aa).

Residues 1-188 are enoyl-CoA hydratase; sequence MEKTFNLTRR…KMGLVNDVVP (188 aa). Positions 308-709 are 3-hydroxyacyl-CoA dehydrogenase; sequence RKVKKAVILG…EMAAEKTRFF (402 aa).

In the N-terminal section; belongs to the enoyl-CoA hydratase/isomerase family. This sequence in the central section; belongs to the 3-hydroxyacyl-CoA dehydrogenase family. Heterotetramer of two alpha chains (FadJ) and two beta chains (FadI).

It is found in the cytoplasm. It carries out the reaction a (3S)-3-hydroxyacyl-CoA = a (2E)-enoyl-CoA + H2O. It catalyses the reaction a 4-saturated-(3S)-3-hydroxyacyl-CoA = a (3E)-enoyl-CoA + H2O. The enzyme catalyses a (3S)-3-hydroxyacyl-CoA + NAD(+) = a 3-oxoacyl-CoA + NADH + H(+). The catalysed reaction is (3S)-3-hydroxybutanoyl-CoA = (3R)-3-hydroxybutanoyl-CoA. Its pathway is lipid metabolism; fatty acid beta-oxidation. Functionally, catalyzes the formation of a hydroxyacyl-CoA by addition of water on enoyl-CoA. Also exhibits 3-hydroxyacyl-CoA epimerase and 3-hydroxyacyl-CoA dehydrogenase activities. The protein is Fatty acid oxidation complex subunit alpha of Shewanella sp. (strain MR-4).